Consider the following 251-residue polypeptide: MLLIPAIDLKDGQCVRLKQGDMDQATIFSEDPAAMARKWVDLGARRLHLVDLNGAFAGKPKNLEAIEAILDEVGDEIPVQLGGGIRSLETIEKYLDAGLSYVIIGTAAVKNPGFLQDACTAFSGSIIVGLDAKDGKVATDGWSKLTGHEVIDLAKKFEDYGVESIVYTDIGRDGMLQGINIDATVKLAQAVGIPVIASGGLSNLPDIESLCEVEEHGVEGVICGRAIYSGDLDFAAAQKRADELNGELDNA.

Aspartate 8 functions as the Proton acceptor in the catalytic mechanism. Aspartate 131 functions as the Proton donor in the catalytic mechanism.

Belongs to the HisA/HisF family.

The protein resides in the cytoplasm. The catalysed reaction is 1-(5-phospho-beta-D-ribosyl)-5-[(5-phospho-beta-D-ribosylamino)methylideneamino]imidazole-4-carboxamide = 5-[(5-phospho-1-deoxy-D-ribulos-1-ylimino)methylamino]-1-(5-phospho-beta-D-ribosyl)imidazole-4-carboxamide. It functions in the pathway amino-acid biosynthesis; L-histidine biosynthesis; L-histidine from 5-phospho-alpha-D-ribose 1-diphosphate: step 4/9. In Burkholderia cenocepacia (strain HI2424), this protein is 1-(5-phosphoribosyl)-5-[(5-phosphoribosylamino)methylideneamino] imidazole-4-carboxamide isomerase.